Reading from the N-terminus, the 230-residue chain is Large ribosomal subunit protein uL1 (230 aa).

Belongs to the universal ribosomal protein uL1 family. Part of the 50S ribosomal subunit.

Binds directly to 23S rRNA. The L1 stalk is quite mobile in the ribosome, and is involved in E site tRNA release. In terms of biological role, protein L1 is also a translational repressor protein, it controls the translation of the L11 operon by binding to its mRNA. The chain is Large ribosomal subunit protein uL1 from Staphylococcus aureus (strain Mu3 / ATCC 700698).